A 551-amino-acid polypeptide reads, in one-letter code: Calnexin (551 aa).

The first 23 residues, methionine 1–alanine 23, serve as a signal peptide directing secretion. Over aspartate 24–alanine 477 the chain is Lumenal. Residues glutamate 293–aspartate 315 form a disordered region. The helical transmembrane segment at alanine 478 to isoleucine 498 threads the bilayer. Topologically, residues glycine 499–glutamate 551 are cytoplasmic. The segment at lysine 526 to glutamate 551 is disordered.

It belongs to the calreticulin family.

The protein localises to the endoplasmic reticulum membrane. Its function is as follows. Endoplasmic reticulum (ER) chaperone that functions to stabilize non-native glycoproteins and retain them in the ER until they are properly folded or targeted for ER associated degradation (ERAD). With co-chaperone DNJ1, coordinately maintains ER homeostasis and contributes to maintenance of cell wall architecture. The sequence is that of Calnexin from Cryptococcus neoformans var. grubii serotype A (strain H99 / ATCC 208821 / CBS 10515 / FGSC 9487) (Filobasidiella neoformans var. grubii).